A 234-amino-acid chain; its full sequence is O-antigen biosynthesis glycosyltransferase WbnI (234 aa).

Substrate-binding positions include 8–13 (ICTGEY), 93–95 (NAV), and 115–118 (HPGY). Glu-185 functions as the Nucleophile in the catalytic mechanism.

The protein belongs to the glycosyltransferase 6 family. It depends on Mn(2+) as a cofactor.

It carries out the reaction alpha-L-Fuc-(1-&gt;2)-beta-D-Gal-(1-&gt;3)-alpha-D-GalNAc-(1-&gt;3)-alpha-D-GalNAc-di-trans,octa-cis-undecaprenyl diphosphate + UDP-alpha-D-galactose = alpha-L-Fuc-(1-&gt;2)-[alpha-D-Gal-(1-&gt;3)]-beta-D-Gal-(1-&gt;3)-alpha-D-GalNAc-(1-&gt;3)-alpha-D-GalNAc-di-trans,octa-cis-undecaprenyl diphosphate + UDP + H(+). Its pathway is bacterial outer membrane biogenesis; LPS O-antigen biosynthesis. Functionally, involved in the assembly of the O-repeating unit during O-antigen biosynthesis. The chain is O-antigen biosynthesis glycosyltransferase WbnI from Escherichia coli.